An 884-amino-acid polypeptide reads, in one-letter code: Lon protease homolog 2, peroxisomal (884 aa).

Positions 12–255 constitute a Lon N-terminal domain; sequence LAILPFRNKV…KATELVDRHL (244 aa). The tract at residues 67–101 is disordered; that stretch reads SLLSPGVGSDSGEGGSKAPGGSAGESTKQDTKNGK. Over residues 75–89 the composition is skewed to gly residues; the sequence is SDSGEGGSKAPGGSA. Residue 408–415 participates in ATP binding; that stretch reads GPPGVGKT. The 186-residue stretch at 689 to 874 folds into the Lon proteolytic domain; it reads VASPGVSVGL…EEVLDHAFEG (186 aa). Active-site residues include Ser780 and Lys823. A Microbody targeting signal motif is present at residues 882 to 884; the sequence is SKL.

The protein belongs to the peptidase S16 family.

The protein localises to the peroxisome matrix. It catalyses the reaction Hydrolysis of proteins in presence of ATP.. In terms of biological role, ATP-dependent serine protease that mediates the selective degradation of misfolded and unassembled polypeptides in the peroxisomal matrix. Necessary for type 2 peroxisome targeting signal (PTS2)-containing protein processing and facilitates peroxisome matrix protein import. This chain is Lon protease homolog 2, peroxisomal, found in Oryza sativa subsp. japonica (Rice).